A 187-amino-acid chain; its full sequence is Ribosome-recycling factor (187 aa).

This sequence belongs to the RRF family.

The protein localises to the cytoplasm. Functionally, responsible for the release of ribosomes from messenger RNA at the termination of protein biosynthesis. May increase the efficiency of translation by recycling ribosomes from one round of translation to another. The polypeptide is Ribosome-recycling factor (Ruegeria sp. (strain TM1040) (Silicibacter sp.)).